Reading from the N-terminus, the 473-residue chain is NADH-quinone oxidoreductase subunit N (473 aa).

Helical transmembrane passes span 3-23, 30-50, 62-82, 99-119, 120-140, 153-173, 195-215, 230-252, 262-282, 291-311, 326-346, 368-388, 408-428, and 444-464; these read LHYL…LVIA, LAFY…CSLL, FSSM…FLWL, FYLL…SEHF, ASFF…IAYS, YLIL…IVYL, MLFT…LSLV, LPTT…WKLF, IVLT…NLLA, ILAF…FLFN, ALLF…SILM, AASL…LGFM, FLVI…MVML, and VASL…PALF.

It belongs to the complex I subunit 2 family. In terms of assembly, NDH-1 is composed of 13 different subunits. Subunits NuoA, H, J, K, L, M, N constitute the membrane sector of the complex.

It is found in the cell inner membrane. It catalyses the reaction a quinone + NADH + 5 H(+)(in) = a quinol + NAD(+) + 4 H(+)(out). NDH-1 shuttles electrons from NADH, via FMN and iron-sulfur (Fe-S) centers, to quinones in the respiratory chain. The immediate electron acceptor for the enzyme in this species is believed to be ubiquinone. Couples the redox reaction to proton translocation (for every two electrons transferred, four hydrogen ions are translocated across the cytoplasmic membrane), and thus conserves the redox energy in a proton gradient. The sequence is that of NADH-quinone oxidoreductase subunit N from Shewanella woodyi (strain ATCC 51908 / MS32).